The primary structure comprises 119 residues: Beta-2-microglobulin (119 aa).

Positions 1–20 (MAPFVAIALLVLLSLSGLEA) are cleaved as a signal peptide. The region spanning 25 to 114 (PKIQVYSRHP…VTFSTPKTVK (90 aa)) is the Ig-like C1-type domain. A disulfide bridge connects residues C45 and C100.

The protein belongs to the beta-2-microglobulin family. In terms of assembly, heterodimer of an alpha chain and a beta chain. Beta-2-microglobulin is the beta-chain of major histocompatibility complex class I molecules.

It localises to the secreted. Functionally, component of the class I major histocompatibility complex (MHC). Involved in the presentation of peptide antigens to the immune system. In Cheracebus torquatus (Collared titi monkey), this protein is Beta-2-microglobulin (B2M).